A 396-amino-acid polypeptide reads, in one-letter code: Decapping and exoribonuclease protein (396 aa).

The segment covering 1 to 20 (MDPRGTKRGAEKTEVAEPRN) has biased composition (basic and acidic residues). The disordered stretch occupies residues 1 to 37 (MDPRGTKRGAEKTEVAEPRNKLPRPAPSLPTDPALYS). Substrate contacts are provided by residues Arg-58, Glu-101, and 131-133 (WRG). Glu-192 lines the Mg(2+) pocket. Residues Cys-217 and Glu-234 each contribute to the substrate site. Mg(2+) contacts are provided by Glu-234, Asp-236, Glu-253, and Leu-254. Residues Lys-255 and Gln-280 each coordinate substrate. A Phosphothreonine modification is found at Thr-392. Ser-394 carries the post-translational modification Phosphoserine.

This sequence belongs to the DXO/Dom3Z family. It depends on Mg(2+) as a cofactor. Ubiquitously expressed.

It localises to the nucleus. It catalyses the reaction a 5'-end triphospho-ribonucleoside in mRNA + H2O = a 5'-end phospho-ribonucleoside in mRNA + diphosphate + H(+). The catalysed reaction is a 5'-end NAD(+)-phospho-ribonucleoside in mRNA + H2O = a 5'-end phospho-ribonucleoside in mRNA + NAD(+) + H(+). It carries out the reaction a 5'-end NAD(+)-phospho-ribonucleoside in snoRNA + H2O = a 5'-end phospho-ribonucleoside in snoRNA + NAD(+) + H(+). The enzyme catalyses a 5'-end (N(7)-methyl 5'-triphosphoguanosine)-ribonucleoside-ribonucleotide in mRNA + H2O = a (N(7)-methyl 5'-triphosphoguanosine)-nucleoside + a 5'-end phospho-ribonucleoside in mRNA + H(+). It catalyses the reaction a 5'-end FAD-phospho-ribonucleoside in mRNA + H2O = a 5'-end phospho-ribonucleoside in mRNA + FAD + H(+). The catalysed reaction is a 5'-end CoA-ribonucleoside in mRNA + H2O = 3'-dephospho-CoA + a 5'-end phospho-ribonucleoside in mRNA + H(+). Its function is as follows. Decapping enzyme for NAD-capped RNAs: specifically hydrolyzes the nicotinamide adenine dinucleotide (NAD) cap from a subset of RNAs by removing the entire NAD moiety from the 5'-end of an NAD-capped RNA. The NAD-cap is present at the 5'-end of some RNAs and snoRNAs. In contrast to the canonical 5'-end N7 methylguanosine (m7G) cap, the NAD cap promotes mRNA decay. Preferentially acts on NAD-capped transcripts in response to environmental stress. Also acts as a non-canonical decapping enzyme that removes the entire cap structure of m7G capped or incompletely capped RNAs and mediates their subsequent degradation. Specifically degrades pre-mRNAs with a defective 5'-end m7G cap and is part of a pre-mRNA capping quality control. Has decapping activity toward incomplete 5'-end m7G cap mRNAs such as unmethylated 5'-end-capped RNA (cap0), while it has no activity toward 2'-O-ribose methylated m7G cap (cap1). In contrast to canonical decapping enzymes DCP2 and NUDT16, which cleave the cap within the triphosphate linkage, the decapping activity releases the entire cap structure GpppN and a 5'-end monophosphate RNA. Also has 5'-3' exoribonuclease activities: The 5'-end monophosphate RNA is then degraded by the 5'-3' exoribonuclease activity, enabling this enzyme to decap and degrade incompletely capped mRNAs. Also possesses RNA 5'-pyrophosphohydrolase activity by hydrolyzing the 5'-end triphosphate to release pyrophosphates. Exhibits decapping activity towards FAD-capped RNAs. Exhibits decapping activity towards dpCoA-capped RNAs in vitro. This Homo sapiens (Human) protein is Decapping and exoribonuclease protein.